Here is a 382-residue protein sequence, read N- to C-terminus: Dual-specificity RNA methyltransferase RlmN (382 aa).

Glutamate 96 (proton acceptor) is an active-site residue. One can recognise a Radical SAM core domain in the interval 102–340; that stretch reads QNGRGTLCVS…VTVRTTRGDD (239 aa). The cysteines at positions 109 and 345 are disulfide-linked. The [4Fe-4S] cluster site is built by cysteine 116, cysteine 120, and cysteine 123. Residues 170–171, serine 202, 224–226, and asparagine 302 each bind S-adenosyl-L-methionine; these read GE and SLH. The active-site S-methylcysteine intermediate is cysteine 345.

Belongs to the radical SAM superfamily. RlmN family. Requires [4Fe-4S] cluster as cofactor.

It localises to the cytoplasm. It catalyses the reaction adenosine(2503) in 23S rRNA + 2 reduced [2Fe-2S]-[ferredoxin] + 2 S-adenosyl-L-methionine = 2-methyladenosine(2503) in 23S rRNA + 5'-deoxyadenosine + L-methionine + 2 oxidized [2Fe-2S]-[ferredoxin] + S-adenosyl-L-homocysteine. The enzyme catalyses adenosine(37) in tRNA + 2 reduced [2Fe-2S]-[ferredoxin] + 2 S-adenosyl-L-methionine = 2-methyladenosine(37) in tRNA + 5'-deoxyadenosine + L-methionine + 2 oxidized [2Fe-2S]-[ferredoxin] + S-adenosyl-L-homocysteine. Functionally, specifically methylates position 2 of adenine 2503 in 23S rRNA and position 2 of adenine 37 in tRNAs. m2A2503 modification seems to play a crucial role in the proofreading step occurring at the peptidyl transferase center and thus would serve to optimize ribosomal fidelity. The chain is Dual-specificity RNA methyltransferase RlmN from Ectopseudomonas mendocina (strain ymp) (Pseudomonas mendocina).